The following is a 258-amino-acid chain: Acetylglutamate kinase (258 aa).

Residues 44–45 (GG), R66, and N158 contribute to the substrate site. Residues 181–186 (DVSGIL) and 209–211 (IIT) each bind ATP.

This sequence belongs to the acetylglutamate kinase family. ArgB subfamily. As to quaternary structure, homodimer.

The protein localises to the cytoplasm. The catalysed reaction is N-acetyl-L-glutamate + ATP = N-acetyl-L-glutamyl 5-phosphate + ADP. Its pathway is amino-acid biosynthesis; L-arginine biosynthesis; N(2)-acetyl-L-ornithine from L-glutamate: step 2/4. Catalyzes the ATP-dependent phosphorylation of N-acetyl-L-glutamate. The sequence is that of Acetylglutamate kinase from Shigella sonnei (strain Ss046).